Reading from the N-terminus, the 69-residue chain is Putative membrane protein insertion efficiency factor (69 aa).

Belongs to the UPF0161 family.

The protein resides in the cell membrane. Its function is as follows. Could be involved in insertion of integral membrane proteins into the membrane. The sequence is that of Putative membrane protein insertion efficiency factor from Caldanaerobacter subterraneus subsp. tengcongensis (strain DSM 15242 / JCM 11007 / NBRC 100824 / MB4) (Thermoanaerobacter tengcongensis).